The chain runs to 290 residues: Short-chain dehydrogenase srdE (290 aa).

NADP(+)-binding residues include I11, T37, D58, and N86. A helical membrane pass occupies residues 125-145; that stretch reads LIASSGIIVNIGSIGGVVPFV. Residue Y150 participates in NADP(+) binding. Y150 functions as the Proton donor in the catalytic mechanism. N-linked (GlcNAc...) asparagine glycosylation occurs at N151. Residues K154, V183, and T185 each coordinate NADP(+). Catalysis depends on K154, which acts as the Lowers pKa of active site Tyr.

The protein belongs to the short-chain dehydrogenases/reductases (SDR) family.

It is found in the membrane. Short-chain dehydrogenase; part of the gene cluster that mediates the biosynthesis of sordarial, a salicylic aldehyde structurally related to the phytotoxin pyriculol. The most interesting aspect of this pathway is formation of an aromatic product from the highly reducing polyketide synthase srdA. SrdA synthesizes a reduced polyketide chain from one molecule of acetyl-CoA and five molecules of malonyl-CoA. The polyketide chain is then reductively released as an aldehyde. The oxidoreductases srdC, srdD and srdE then oxidize one of the hydroxy groups to facilitate the intramolecular aldol condensation, followed by dehydration to yield a salicylic aldehyde. This aldehyde can undergo facile reduction by endogenous reductases to yield the alcohol 1-hydroxy-2-hydroxymethyl-3-pent-1,3-dienylbenzene. The flavin-dependent srdI counteract against the propensity of the aldehydes to be reduced under physiological conditions and is responsible for reoxidizing 1-hydroxy-2-hydroxymethyl-3-pent-1,3-dienylbenzene back to the salicylic aldehyde. This salicylic aldehyde is then selectively epoxidized by the cupin-domain-containing oxidoreductase srdB to yield the epoxide, which can be hydrolyzed stereoselectively by the hydrolase srdG to give the final product sordarial. The polypeptide is Short-chain dehydrogenase srdE (Neurospora crassa (strain ATCC 24698 / 74-OR23-1A / CBS 708.71 / DSM 1257 / FGSC 987)).